A 339-amino-acid polypeptide reads, in one-letter code: 3,4-dihydroxy-2-butanone 4-phosphate synthase (339 aa).

Residues 1–206 (MKFVSVEQAI…YRLKHESLIK (206 aa)) form a DHBP synthase region. D-ribulose 5-phosphate contacts are provided by residues 27–28 (RE), Asp32, 139–143 (RTGHT), and Glu163. Mg(2+) is bound at residue Glu28. His142 contacts Mg(2+). The segment at 207–339 (LEEKSQSVLA…GLNLKACNFN (133 aa)) is GTP cyclohydrolase II-like.

The protein in the N-terminal section; belongs to the DHBP synthase family. In the C-terminal section; belongs to the GTP cyclohydrolase II family. Requires Mg(2+) as cofactor. Mn(2+) serves as cofactor.

It carries out the reaction D-ribulose 5-phosphate = (2S)-2-hydroxy-3-oxobutyl phosphate + formate + H(+). It functions in the pathway cofactor biosynthesis; riboflavin biosynthesis; 2-hydroxy-3-oxobutyl phosphate from D-ribulose 5-phosphate: step 1/1. Catalyzes the conversion of D-ribulose 5-phosphate to formate and 3,4-dihydroxy-2-butanone 4-phosphate. This chain is 3,4-dihydroxy-2-butanone 4-phosphate synthase (ribB), found in Campylobacter jejuni subsp. jejuni serotype O:2 (strain ATCC 700819 / NCTC 11168).